The chain runs to 240 residues: Ribonuclease PH (240 aa).

Phosphate contacts are provided by residues Arg-87 and Gly-125–Arg-127.

This sequence belongs to the RNase PH family. Homohexameric ring arranged as a trimer of dimers.

It carries out the reaction tRNA(n+1) + phosphate = tRNA(n) + a ribonucleoside 5'-diphosphate. Functionally, phosphorolytic 3'-5' exoribonuclease that plays an important role in tRNA 3'-end maturation. Removes nucleotide residues following the 3'-CCA terminus of tRNAs; can also add nucleotides to the ends of RNA molecules by using nucleoside diphosphates as substrates, but this may not be physiologically important. Probably plays a role in initiation of 16S rRNA degradation (leading to ribosome degradation) during starvation. This is Ribonuclease PH from Pseudomonas syringae pv. tomato (strain ATCC BAA-871 / DC3000).